A 264-amino-acid chain; its full sequence is Major prion protein (264 aa).

A signal peptide spans 1–24 (MVKSHIGSWILVLFVAMWSDVGLC). Residues 25–241 (KKRPKPGGGW…ESQAYYQRGA (217 aa)) are interaction with GRB2, ERI3 and SYN1. A disordered region spans residues 28–118 (PKPGGGWNTG…QWNKPSKPKT (91 aa)). Tandem repeats lie at residues 54–62 (PQGGGSWGQ), 63–70 (PHGGGWGQ), 71–78 (PHGGSWGQ), 79–86 (PHGGGWGQ), 87–94 (PHGGGWGQ), and 95–103 (PHGGGGWGQ). The tract at residues 54 to 103 (PQGGGSWGQPHGGGWGQPHGGSWGQPHGGGWGQPHGGGWGQPHGGGGWGQ) is 6 X 8 AA tandem repeats of P-H-G-G-G-W-G-Q. Over residues 55–107 (QGGGSWGQPHGGGWGQPHGGSWGQPHGGGWGQPHGGGWGQPHGGGGWGQGGTH) the composition is skewed to gly residues. Cu(2+) contacts are provided by H72, G73, G74, H80, G81, G82, H88, G89, G90, H96, G98, and G99. Residues C190 and C225 are joined by a disulfide bond. Residues N192 and N208 are each glycosylated (N-linked (GlcNAc...) asparagine). A241 carries GPI-anchor amidated alanine lipidation. A propeptide spans 242-264 (SVVLFSSPPVVLLISFLIFLIVG) (removed in mature form).

The protein belongs to the prion family. Monomer and homodimer. Has a tendency to aggregate into amyloid fibrils containing a cross-beta spine, formed by a steric zipper of superposed beta-strands. Soluble oligomers may represent an intermediate stage on the path to fibril formation. Copper binding may promote oligomerization. Interacts with GRB2, APP, ERI3/PRNPIP and SYN1. Mislocalized cytosolically exposed PrP interacts with MGRN1; this interaction alters MGRN1 subcellular location and causes lysosomal enlargement. Interacts with KIAA1191.

It is found in the cell membrane. It localises to the golgi apparatus. Its primary physiological function is unclear. Has cytoprotective activity against internal or environmental stresses. May play a role in neuronal development and synaptic plasticity. May be required for neuronal myelin sheath maintenance. May play a role in iron uptake and iron homeostasis. Soluble oligomers are toxic to cultured neuroblastoma cells and induce apoptosis (in vitro). Association with GPC1 (via its heparan sulfate chains) targets PRNP to lipid rafts. Also provides Cu(2+) or Zn(2+) for the ascorbate-mediated GPC1 deaminase degradation of its heparan sulfate side chains. The sequence is that of Major prion protein (PRNP) from Boselaphus tragocamelus (Nilgai).